A 58-amino-acid chain; its full sequence is Probable U-exon protein (58 aa).

The protein is Probable U-exon protein of Snake adenovirus serotype 1 (SnAdV-1).